The chain runs to 563 residues: Calmodulin-binding protein 60 G (563 aa).

Positions 1–76 are calmodulin-binding; that stretch reads MKIRNSPSFH…SSCVSMERSR (76 aa). The interval 147–263 is DNA-binding; it reads ESWTVEGFNR…VSATRLAERK (117 aa).

The protein belongs to the plant ACBP60 protein family. Interacts with calmodulin (CaM) in the presence of calcium ions; this interaction is required for defense responses. As to quaternary structure, (Microbial infection) Interacts with V.dahliae SCP41; the interaction is direct and inhibits CBP60G. As to expression, expressed in seedlings, roots, leaves, inflorescences and flowers, and, to a lower extent, in siliques. Particularly present in guard cells.

The protein resides in the nucleus. Transcription activator that binds DNA in a sequence-specific manner, 5'-GAAATTTTGG-3', to promote the expression of target genes. Recruited to the promoter of ICS1 and other defense-related genes (e.g. PR1, PR2 and EDS5) in response to both biotic (e.g. Pseudomonas syringae pv. maculicola ES4326, P.syringae pv. tomato DC3000, and microbe-associated molecular patterns (MAMPs) such as flg22) and abiotic stresses (e.g. UV-B, drought and abscisic acid), thus triggering rapid defense responses by stimulating salicylic acid (SA) biosynthesis. Involved in basal and systemic acquired resistance to P.syringae and Hyaloperonospora arabidopsidis. Mediates resistance to drought and sensitivity to abscisic acid (ABA), especially for ABA-mediated signaling process that regulates early seedling growth. The sequence is that of Calmodulin-binding protein 60 G from Arabidopsis thaliana (Mouse-ear cress).